The chain runs to 267 residues: Putative ABC transporter permease protein MJ0413 (267 aa).

7 helical membrane passes run 18–38 (VLKISLPALAVVIWELLAIYI), 48–68 (EAVINVLIHPFQGILGTGSLI), 78–98 (VISGFLLASAVAIPLGILMGY), 115–135 (PIPPLAWVPLSLAWFGLGEMS), 136–156 (MIFIIFIGAFFPILINTISGV), 188–208 (PSILTGLRVGAGIAWMCVVAA), and 228–248 (LSRMDVVIACMIIIGLIGLVL). The ABC transmembrane type-1 domain maps to 71–252 (TIISIKRVIS…LIGLVLDRGL (182 aa)).

This sequence belongs to the binding-protein-dependent transport system permease family. CysTW subfamily.

It is found in the cell membrane. In terms of biological role, probably part of a binding-protein-dependent transport system. Probably responsible for the translocation of the substrate across the membrane. The protein is Putative ABC transporter permease protein MJ0413 of Methanocaldococcus jannaschii (strain ATCC 43067 / DSM 2661 / JAL-1 / JCM 10045 / NBRC 100440) (Methanococcus jannaschii).